The primary structure comprises 473 residues: MQQPDIHFIPEMRRIRRIHFVGVGGAGMSGIAEVLHNQGYLISGSDLRESDVTRRLSAMGMTIYVGHHAKNVHGVDVVVNSSAVDEANPELLEARQQRIPVVRRAEMLGELMRYRHGIAVAGTHGKTTTTSLIASIFAEGDKDPTFVIGGLLNSAGTNAALGASRYLVAEADESDASFLHLQPMVAVVTNIDADHMDTYGGDFGTLKKTFVEFLHNLPFYGVAVMCGDDPVITSLIPDIARTVITYGFSEDCDFKAYDVKQESGKQRFKIKRPEGEPLDIYLNMPGQHNVLNATAAVAVATDEGIDDIAIQQGLAQFMGVGRRFQIYGDYPLPQGGSVMLVDDYGHHPREVAATIRAVRDSWPDRRLFMVYQPHRYTRTRDLYEDFVEVLSSVDQLVLLEVYAAGEEPIPGADGRHLSRTIRTRGLVDPIFVEGIEGVPAVVKDLVKPGDIIITQGAGNVGSLAPTLAKKKFA.

Residue 122–128 (GTHGKTT) coordinates ATP.

Belongs to the MurCDEF family.

It is found in the cytoplasm. The catalysed reaction is UDP-N-acetyl-alpha-D-muramate + L-alanine + ATP = UDP-N-acetyl-alpha-D-muramoyl-L-alanine + ADP + phosphate + H(+). Its pathway is cell wall biogenesis; peptidoglycan biosynthesis. Cell wall formation. This Teredinibacter turnerae (strain ATCC 39867 / T7901) protein is UDP-N-acetylmuramate--L-alanine ligase.